The chain runs to 424 residues: Serine incorporator 5 (424 aa).

The Extracellular portion of the chain corresponds to 1 to 6; that stretch reads MYALYF. A helical membrane pass occupies residues 7-23; that stretch reads ILVVVLCCIMMSTTVAH. Residues 24–52 are Cytoplasmic-facing; that stretch reads KMKEHIPFFEDMCKGIKAGDTCEKLVGYS. A helical membrane pass occupies residues 53-73; the sequence is AVYRVCFGMACFFFIFCLLTL. The Extracellular portion of the chain corresponds to 74–87; it reads KINNSKSCRAHIHN. A glycan (N-linked (GlcNAc...) asparagine) is linked at Asn76. The chain crosses the membrane as a helical span at residues 88 to 108; it reads GFWFFKLLLLGAMCSGAFFIP. Residues 109–119 are Cytoplasmic-facing; the sequence is DQDTFLNAWRY. The chain crosses the membrane as a helical span at residues 120–140; it reads VGAVGGFLFIGIQLLLLVEFA. The Extracellular segment spans residues 141–161; it reads HKWNKNWTAGTASNKLWYASL. A glycan (N-linked (GlcNAc...) asparagine) is linked at Asn146. The helical transmembrane segment at 162–182 threads the bilayer; sequence ALVTLIMYSIATGGLVLMAVF. Over 183-193 the chain is Cytoplasmic; it reads YTQKDGCMENK. A helical transmembrane segment spans residues 194–214; the sequence is ILLGVNGGLCVLISLVAISPC. Residues 215–221 are Extracellular-facing; that stretch reads VQNRQPH. A helical membrane pass occupies residues 222–242; sequence SGLLQSGVISCYVTYLTFSAL. Residues 243–274 lie on the Cytoplasmic side of the membrane; the sequence is SSKPAEVVLDEHGKNVTICVPDFGQDLYRDEN. A helical membrane pass occupies residues 275-295; that stretch reads LVTILGTSLLIGCILYSCLTS. The Extracellular portion of the chain corresponds to 296 to 348; it reads TTRSSSDALQGRYAAPELEIARCCFCFSPGGEDTEEQQQGKEGPRVIYDEKKG. A helical transmembrane segment spans residues 349–369; that stretch reads TVYIYSYFHFVFFLASLYVMM. The Cytoplasmic segment spans residues 370 to 391; sequence TVTNWFNYESANIESFFSGSWS. A helical transmembrane segment spans residues 392–412; the sequence is IFWVKMASCWICVLLYLCTLV. Residues 413–424 lie on the Extracellular side of the membrane; it reads APLCCPTREFSV.

It belongs to the TDE1 family.

Its subcellular location is the cell membrane. It carries out the reaction a 1,2-diacyl-sn-glycero-3-phospho-L-serine(in) = a 1,2-diacyl-sn-glycero-3-phospho-L-serine(out). It catalyses the reaction a 1,2-diacyl-sn-glycero-3-phosphocholine(in) = a 1,2-diacyl-sn-glycero-3-phosphocholine(out). The enzyme catalyses a 1,2-diacyl-sn-glycero-3-phosphoethanolamine(in) = a 1,2-diacyl-sn-glycero-3-phosphoethanolamine(out). Functionally, restriction factor required to restrict infectivity of gammaretroviruses: acts by inhibiting an early step of viral infection. Impairs the penetration of the viral particle into the cytoplasm. Non-ATP-dependent, non-specific lipid transporter for phosphatidylserine, phosphatidylcholine, and phosphatidylethanolamine. Functions as a scramblase that flips lipids in both directions across the membrane. Phospholipid scrambling results in gammaretroviral surface exposure of phosphatidylserine and loss of membrane asymmetry, which leads to loss of infectivity. Enhances the incorporation of serine into phosphatidylserine and sphingolipids. May play a role in providing serine molecules for the formation of myelin glycosphingolipids in oligodendrocytes. The protein is Serine incorporator 5 (SERINC5) of Macaca fascicularis (Crab-eating macaque).